A 1099-amino-acid chain; its full sequence is Transmembrane protein 132C (1099 aa).

The first 31 residues, M1–S31, serve as a signal peptide directing secretion. Over R32–D915 the chain is Extracellular. The N-linked (GlcNAc...) asparagine glycan is linked to N95. Residues G237–R260 form a disordered region. N314 and N371 each carry an N-linked (GlcNAc...) asparagine glycan. Residues D801–D872 form a disordered region. Positions E813–G849 are enriched in basic and acidic residues. The helical transmembrane segment at L916–I936 threads the bilayer. Residues N937–V1099 lie on the Cytoplasmic side of the membrane. A disordered region spans residues N1002 to K1045. A compositionally biased stretch (polar residues) spans G1008–V1018.

The protein belongs to the TMEM132 family.

It localises to the membrane. This Mus musculus (Mouse) protein is Transmembrane protein 132C (Tmem132c).